The following is a 423-amino-acid chain: Gamma-glutamyl phosphate reductase (423 aa).

Belongs to the gamma-glutamyl phosphate reductase family.

The protein localises to the cytoplasm. It carries out the reaction L-glutamate 5-semialdehyde + phosphate + NADP(+) = L-glutamyl 5-phosphate + NADPH + H(+). The protein operates within amino-acid biosynthesis; L-proline biosynthesis; L-glutamate 5-semialdehyde from L-glutamate: step 2/2. Functionally, catalyzes the NADPH-dependent reduction of L-glutamate 5-phosphate into L-glutamate 5-semialdehyde and phosphate. The product spontaneously undergoes cyclization to form 1-pyrroline-5-carboxylate. The protein is Gamma-glutamyl phosphate reductase of Pseudomonas fluorescens (strain Pf0-1).